Here is a 507-residue protein sequence, read N- to C-terminus: Glycerol kinase (507 aa).

T12 lines the ADP pocket. ATP-binding residues include T12, T13, and S14. T12 serves as a coordination point for sn-glycerol 3-phosphate. R16 contacts ADP. Residues R82, E83, Y134, and D250 each coordinate sn-glycerol 3-phosphate. The glycerol site is built by R82, E83, Y134, D250, and Q251. 2 residues coordinate ADP: T272 and G316. 4 residues coordinate ATP: T272, G316, Q320, and G417. Residues G417 and N421 each coordinate ADP.

Belongs to the FGGY kinase family.

The enzyme catalyses glycerol + ATP = sn-glycerol 3-phosphate + ADP + H(+). It functions in the pathway polyol metabolism; glycerol degradation via glycerol kinase pathway; sn-glycerol 3-phosphate from glycerol: step 1/1. Its activity is regulated as follows. Inhibited by fructose 1,6-bisphosphate (FBP). In terms of biological role, key enzyme in the regulation of glycerol uptake and metabolism. Catalyzes the phosphorylation of glycerol to yield sn-glycerol 3-phosphate. The polypeptide is Glycerol kinase (Beijerinckia indica subsp. indica (strain ATCC 9039 / DSM 1715 / NCIMB 8712)).